The following is a 79-amino-acid chain: Protein S100-G (79 aa).

S2 bears the N-acetylserine mark. 2 EF-hand domains span residues 13-48 (IFEK…KGPS) and 45-79 (KGPS…KISQ). Residues Q26 and E31 each contribute to the Ca(2+) site. S42 carries the post-translational modification Phosphoserine. Ca(2+)-binding residues include D58, N60, D62, E64, and E69.

It belongs to the S-100 family.

In Bos taurus (Bovine), this protein is Protein S100-G (S100G).